The chain runs to 476 residues: MAIKFLEVIKPFCVILPEIQKPERKIQFKEKVLWTAITLFIFLVCCQIPLFGIMSSDSADPFYWMRVILASNRGTLMELGISPIVTSGLIMQLLAGAKIIEVGDTPKDRALFNGAQKLFGMIITIGQSIVYVMTGMYGDPSEMGAGICLLITIQLFVAGLIVLLLDELLQKGYGLGSGISLFIATNICETIVWKAFSPTTVNTGRGMEFEGAIIALFHLLATRTDKVRALREAFYRQNLPNLMNLIATIFVFAVVIYFQGFRVDLPIKSARYRGQYNTYPIKLFYTSNIPIILQSALVSNLYVISQMLSARFSGNLLVSLLGTWSDTSSGGPARAYPVGGLCHYLSPPESFGSVLEDPVHAVVYIVFMLGSCAFFSKTWIEVSGSSAKDVAKQLKEQQMVMRGHRETSMVHELNRYIPTAAAFGGLCIGALSVLADFLGAIGSGTGILLAVTIIYQYFEIFVKEQSEVGSMGALLF.

Residues 2–28 are Cytoplasmic-facing; it reads AIKFLEVIKPFCVILPEIQKPERKIQF. The chain crosses the membrane as a helical span at residues 29–46; it reads KEKVLWTAITLFIFLVCC. The Lumenal segment spans residues 47 to 80; it reads QIPLFGIMSSDSADPFYWMRVILASNRGTLMELG. Residues 81 to 97 traverse the membrane as a helical segment; that stretch reads ISPIVTSGLIMQLLAGA. The Cytoplasmic portion of the chain corresponds to 98 to 109; the sequence is KIIEVGDTPKDR. Residues 110–131 form a helical membrane-spanning segment; that stretch reads ALFNGAQKLFGMIITIGQSIVY. Over 132 to 148 the chain is Lumenal; it reads VMTGMYGDPSEMGAGIC. Residues 149–167 form a helical membrane-spanning segment; sequence LLITIQLFVAGLIVLLLDE. Over 168-177 the chain is Cytoplasmic; it reads LLQKGYGLGS. The chain crosses the membrane as a helical span at residues 178 to 196; sequence GISLFIATNICETIVWKAF. Topologically, residues 197–241 are lumenal; the sequence is SPTTVNTGRGMEFEGAIIALFHLLATRTDKVRALREAFYRQNLPN. The chain crosses the membrane as a helical span at residues 242–259; it reads LMNLIATIFVFAVVIYFQ. Residues 260 to 285 are Cytoplasmic-facing; it reads GFRVDLPIKSARYRGQYNTYPIKLFY. The helical transmembrane segment at 286-306 threads the bilayer; the sequence is TSNIPIILQSALVSNLYVISQ. Over 307-356 the chain is Lumenal; that stretch reads MLSARFSGNLLVSLLGTWSDTSSGGPARAYPVGGLCHYLSPPESFGSVLE. The helical transmembrane segment at 357 to 379 threads the bilayer; sequence DPVHAVVYIVFMLGSCAFFSKTW. Over 380 to 420 the chain is Cytoplasmic; that stretch reads IEVSGSSAKDVAKQLKEQQMVMRGHRETSMVHELNRYIPTA. A helical membrane pass occupies residues 421–437; sequence AAFGGLCIGALSVLADF. Residues 438-443 are Lumenal-facing; sequence LGAIGS. Residues 444 to 458 traverse the membrane as a helical segment; the sequence is GTGILLAVTIIYQYF. The Cytoplasmic segment spans residues 459-476; that stretch reads EIFVKEQSEVGSMGALLF.

Belongs to the SecY/SEC61-alpha family. The SEC61 channel-forming translocon complex consists of channel-forming core components SEC61A1, SEC61B and SEC61G and different auxiliary components such as SEC62 and SEC63. The SEC61 channel associates with the multi-pass translocon (MPT) complex.

It is found in the endoplasmic reticulum membrane. In terms of biological role, component of SEC61 channel-forming translocon complex that mediates transport of signal peptide-containing precursor polypeptides across the endoplasmic reticulum (ER). Forms a ribosome receptor and a gated pore in the ER membrane, both functions required for cotranslational translocation of nascent polypeptides. May cooperate with auxiliary protein SEC62, SEC63 and HSPA5/BiP to enable post-translational transport of small presecretory proteins. The SEC61 channel is also involved in ER membrane insertion of transmembrane proteins: it mediates membrane insertion of the first few transmembrane segments of proteins, while insertion of subsequent transmembrane regions of multi-pass membrane proteins is mediated by the multi-pass translocon (MPT) complex. The SEC61 channel cooperates with the translocating protein TRAM1 to import nascent proteins into the ER. Controls the passive efflux of calcium ions from the ER lumen to the cytosol through SEC61 channel, contributing to the maintenance of cellular calcium homeostasis. Plays a critical role in nephrogenesis, specifically at pronephros stage. This chain is Protein transport protein Sec61 subunit alpha isoform 1 (SEC61A1), found in Canis lupus familiaris (Dog).